The chain runs to 341 residues: tRNA N6-adenosine threonylcarbamoyltransferase (341 aa).

Fe cation-binding residues include H115 and H119. Residues 137-141, D170, G183, D187, and N276 each bind substrate; that span reads IVSGG. Fe cation is bound at residue D304.

This sequence belongs to the KAE1 / TsaD family. Requires Fe(2+) as cofactor.

The protein localises to the cytoplasm. The enzyme catalyses L-threonylcarbamoyladenylate + adenosine(37) in tRNA = N(6)-L-threonylcarbamoyladenosine(37) in tRNA + AMP + H(+). Its function is as follows. Required for the formation of a threonylcarbamoyl group on adenosine at position 37 (t(6)A37) in tRNAs that read codons beginning with adenine. Is involved in the transfer of the threonylcarbamoyl moiety of threonylcarbamoyl-AMP (TC-AMP) to the N6 group of A37, together with TsaE and TsaB. TsaD likely plays a direct catalytic role in this reaction. This is tRNA N6-adenosine threonylcarbamoyltransferase from Staphylococcus aureus (strain MSSA476).